Consider the following 208-residue polypeptide: Cytochrome c biogenesis ATP-binding export protein CcmA (208 aa).

In terms of domain architecture, ABC transporter spans 3–206; it reads LSGKDLAAHR…LEKFVPSQER (204 aa). An ATP-binding site is contributed by 35 to 42; it reads GPNGIGKS.

It belongs to the ABC transporter superfamily. CcmA exporter (TC 3.A.1.107) family. The complex is composed of two ATP-binding proteins (CcmA) and two transmembrane proteins (CcmB).

It localises to the cell inner membrane. It carries out the reaction heme b(in) + ATP + H2O = heme b(out) + ADP + phosphate + H(+). Functionally, part of the ABC transporter complex CcmAB involved in the biogenesis of c-type cytochromes; once thought to export heme, this seems not to be the case, but its exact role is uncertain. Responsible for energy coupling to the transport system. In Bartonella quintana (strain Toulouse) (Rochalimaea quintana), this protein is Cytochrome c biogenesis ATP-binding export protein CcmA.